The primary structure comprises 348 residues: MSTSFTMIGGEGPNSYREHSKYQGALVIAAKEKINEAISTKLDIDFTSNLVNIADFGCSSGPNTFTAVQTLIDAVENKYKKESNIEGIEFQVFFNDSSNNDFNTLFKTLPPARLYFASGVPGSFFGRVLPKNSLHVGVSSYSLHFVSKVPKEIKDRDSLVWNKDIHCSGSSKEVVKLYLGQYKIDVGSFLTARAQELVSGGLLLLLGSCRPTGVQMFETVEGMMIDFIGSSLNEIANQGLIDQQKLDTFKLPIYAPNVDELKQIIEDNKCFTIEAFEKISHAKGEYPLDPEYLTSAFKVTVGGSVASLFGQDGMEKTYELVKEKTQEMLPQIAKAKPGMQYLIVLRRN.

Y16 lines the S-adenosyl-L-methionine pocket. Substrate contacts are provided by residues Y16 and 19–23 (HSKYQ). S-adenosyl-L-methionine-binding positions include G57, 57-58 (GC), N63, 94-97 (FNDS), 123-125 (SFF), and 140-142 (SYS). 141-145 (YSLHF) lines the substrate pocket. Positions 162, 247, and 249 each coordinate Mg(2+).

The protein belongs to the methyltransferase superfamily. SABATH family. In terms of assembly, homodimer. The cofactor is Mg(2+). In terms of tissue distribution, mostly expressed in leaves and, at very low levels, in roots, stems, flowers and siliques.

It catalyses the reaction (2E,6E)-farnesoate + S-adenosyl-L-methionine = methyl (2E,6E)-farnesoate + S-adenosyl-L-homocysteine. The enzyme catalyses juvenile hormone III carboxylate + S-adenosyl-L-methionine = juvenile hormone III + S-adenosyl-L-homocysteine. It functions in the pathway sesquiterpene biosynthesis. Its activity is regulated as follows. Activated by Mn(2+) ions. Strongly inhibited by Cu(2+), Zn(2+), Fe(3+) and Fe(2+) ions. Moderately inhibited by Na(+) and Ca(2+) ions. Rapidly degraded at temperatures above 40 degrees Celsius. Its function is as follows. May catalyze the production of the insect juvenile hormone methyl farnesoate (MeFA) to trigger defense against insect herbivory. In Arabidopsis thaliana (Mouse-ear cress), this protein is Farnesoic acid carboxyl-O-methyltransferase.